Consider the following 157-residue polypeptide: Class-10 pathogenesis-related protein 1 (157 aa).

It belongs to the BetVI family. In terms of tissue distribution, expressed in roots. Detected in nodules and leaves, but not in stems and flowers.

This Medicago truncatula (Barrel medic) protein is Class-10 pathogenesis-related protein 1 (PR10-1).